A 412-amino-acid chain; its full sequence is DnaJ homolog subfamily A member 2 (412 aa).

Positions 8–70 (KLYDILGVPP…EKRELYDRYG (63 aa)) constitute a J domain. Lys39 carries the post-translational modification N6-acetyllysine. 2 positions are modified to phosphoserine: Ser78 and Ser123. A CR-type zinc finger spans residues 130–214 (GKTTKLQLSK…CEGKKVIKEV (85 aa)). Lys134 is covalently cross-linked (Glycyl lysine isopeptide (Lys-Gly) (interchain with G-Cter in SUMO2)). Cys143 and Cys146 together coordinate Zn(2+). One copy of the CXXCXGXG motif repeat lies at 143–150 (CSACSGQG). Position 152 is an N6-acetyllysine (Lys152). Zn(2+)-binding residues include Cys159, Cys162, Cys186, Cys189, Cys202, and Cys205. CXXCXGXG motif repeat units follow at residues 159–166 (CSACRGRG), 186–193 (CSDCNGEG), and 202–209 (CKKCEGKK). The interval 365-412 (IGETEEVELQEFDSTRGSGGGQRREAYNDSSDEESSSHHGPGVQCAHQ) is disordered. A Phosphotyrosine modification is found at Tyr391. 2 positions are modified to phosphoserine: Ser394 and Ser395. Cys409 carries the post-translational modification Cysteine methyl ester. A lipid anchor (S-farnesyl cysteine) is attached at Cys409. Positions 410–412 (AHQ) are cleaved as a propeptide — removed in mature form.

Its subcellular location is the membrane. Functionally, co-chaperone of Hsc70. Stimulates ATP hydrolysis and the folding of unfolded proteins mediated by HSPA1A/B (in vitro). The protein is DnaJ homolog subfamily A member 2 (Dnaja2) of Rattus norvegicus (Rat).